The chain runs to 363 residues: MEIQNTKPTQTLYTDISTKQTQSSSETQKSQNYQQIAAHIPLNVGKNPVLTTTLNDDQLLKLSEQVQHDSEIIARLTDKKMKDLSEMSHTLTPENTLDISSLSSNAVSLIISVAVLLSALRTAETKLGSQLSLIAFDATKSAAENIVRQGLAALSSSITGAVTQVGITGIGAKKTHSGISDQKGALRKNLATAQSLEKELAGSKLGLNKQIDTNITSPQTNSSTKFLGKNKLAPDNISLSTEHKTSLSSPDISLQDKIDTQRRTYELNTLSAQQKQNIGRATMETSAVAGNISTSGGRYASALEEEEQLISQASSKQAEEASQVSKEASQATNQLIQKLLNIIDSINQSKNSAASQIAGNIRA.

Polar residues predominate over residues 1 to 16 (MEIQNTKPTQTLYTDI). The interval 1–30 (MEIQNTKPTQTLYTDISTKQTQSSSETQKS) is disordered. A compositionally biased stretch (low complexity) spans 17 to 30 (STKQTQSSSETQKS). Residues 33-73 (YQQIAAHIPLNVGKNPVLTTTLNDDQLLKLSEQVQHDSEII) are ipgC chaperone binding domain. The helical transmembrane segment at 99-120 (ISSLSSNAVSLIISVAVLLSAL) threads the bilayer.

Belongs to the SctB/SipC family. As to quaternary structure, the core secretion machinery of the T3SS is composed of approximately 20 different proteins, including cytoplasmic components, a base, an export apparatus and a needle. This subunit is involved in the formation of a pore, called the translocon, in host membrane. Interacts with IpaB/SctE. Interacts with the molecular chaperone IpgC, which prevents premature association with IpaB/SctE within the cytoplasm of Shigella cells. Does not interact with CDC42 or RAC1 GTPases in vitro.

Its subcellular location is the secreted. The protein resides in the host membrane. With respect to regulation, interaction with the membrane is affected by the pH. Its function is as follows. Component of the type III secretion system (T3SS), also called injectisome, which is used to inject bacterial effector proteins into eukaryotic host cells. IpaB/SctE and IpaC/SctB are inserted into the host membrane where they form a pore and allow the translocation of effector proteins into the cytosol of target cells. Induction and secretion of IpaC/SctB comprise the final step in triggering the induction of full type III secretion. In terms of biological role, required for efficient dissemination. Necessary for lysis of the two cellular membranes that surround bacteria in protrusions during cell-to-cell spread. Contribute to actin nucleation in vitro, which may be a necessary step in Shigella invasion. This is Type 3 secretion system translocon protein SctB from Shigella flexneri.